Here is a 361-residue protein sequence, read N- to C-terminus: Phospho-N-acetylmuramoyl-pentapeptide-transferase (361 aa).

The next 10 membrane-spanning stretches (helical) occupy residues Leu28–Leu48, Thr74–Leu94, Ile99–Ala119, Leu135–Ser155, Ser167–Ala187, Val203–Ile223, Thr236–Phe256, Val263–Ile283, Ile288–Val308, and Lys338–Leu358.

It belongs to the glycosyltransferase 4 family. MraY subfamily. The cofactor is Mg(2+).

It is found in the cell inner membrane. The enzyme catalyses UDP-N-acetyl-alpha-D-muramoyl-L-alanyl-gamma-D-glutamyl-meso-2,6-diaminopimeloyl-D-alanyl-D-alanine + di-trans,octa-cis-undecaprenyl phosphate = di-trans,octa-cis-undecaprenyl diphospho-N-acetyl-alpha-D-muramoyl-L-alanyl-D-glutamyl-meso-2,6-diaminopimeloyl-D-alanyl-D-alanine + UMP. Its pathway is cell wall biogenesis; peptidoglycan biosynthesis. In terms of biological role, catalyzes the initial step of the lipid cycle reactions in the biosynthesis of the cell wall peptidoglycan: transfers peptidoglycan precursor phospho-MurNAc-pentapeptide from UDP-MurNAc-pentapeptide onto the lipid carrier undecaprenyl phosphate, yielding undecaprenyl-pyrophosphoryl-MurNAc-pentapeptide, known as lipid I. This chain is Phospho-N-acetylmuramoyl-pentapeptide-transferase, found in Rickettsia bellii (strain RML369-C).